Here is a 381-residue protein sequence, read N- to C-terminus: Cobalt-precorrin-5B C(1)-methyltransferase (381 aa).

This sequence belongs to the CbiD family.

The catalysed reaction is Co-precorrin-5B + S-adenosyl-L-methionine = Co-precorrin-6A + S-adenosyl-L-homocysteine. It participates in cofactor biosynthesis; adenosylcobalamin biosynthesis; cob(II)yrinate a,c-diamide from sirohydrochlorin (anaerobic route): step 6/10. In terms of biological role, catalyzes the methylation of C-1 in cobalt-precorrin-5B to form cobalt-precorrin-6A. The sequence is that of Cobalt-precorrin-5B C(1)-methyltransferase from Clostridium botulinum (strain Alaska E43 / Type E3).